The sequence spans 394 residues: Formate-dependent phosphoribosylglycinamide formyltransferase (394 aa).

N(1)-(5-phospho-beta-D-ribosyl)glycinamide-binding positions include 22 to 23 (EL) and Glu-82. ATP contacts are provided by residues Arg-114, Lys-155, 160-165 (SSGKGQ), 195-198 (EGFV), and Glu-203. An ATP-grasp domain is found at 119 to 308 (RLAAETLKLP…EFALHVRAIL (190 aa)). Positions 267 and 279 each coordinate Mg(2+). N(1)-(5-phospho-beta-D-ribosyl)glycinamide-binding positions include Asp-286, Lys-357, and 364-365 (RR).

The protein belongs to the PurK/PurT family. In terms of assembly, homodimer.

It carries out the reaction N(1)-(5-phospho-beta-D-ribosyl)glycinamide + formate + ATP = N(2)-formyl-N(1)-(5-phospho-beta-D-ribosyl)glycinamide + ADP + phosphate + H(+). Its pathway is purine metabolism; IMP biosynthesis via de novo pathway; N(2)-formyl-N(1)-(5-phospho-D-ribosyl)glycinamide from N(1)-(5-phospho-D-ribosyl)glycinamide (formate route): step 1/1. Functionally, involved in the de novo purine biosynthesis. Catalyzes the transfer of formate to 5-phospho-ribosyl-glycinamide (GAR), producing 5-phospho-ribosyl-N-formylglycinamide (FGAR). Formate is provided by PurU via hydrolysis of 10-formyl-tetrahydrofolate. The sequence is that of Formate-dependent phosphoribosylglycinamide formyltransferase from Tolumonas auensis (strain DSM 9187 / NBRC 110442 / TA 4).